The chain runs to 195 residues: 3-hydroxyanthranilate 3,4-dioxygenase (195 aa).

R50 contacts O2. Fe cation-binding residues include H54, E60, and H102. E60 serves as a coordination point for substrate. Substrate-binding residues include R106 and E116. 4 residues coordinate a divalent metal cation: C131, C136, C170, and C173.

Belongs to the 3-HAO family. Fe(2+) is required as a cofactor.

It is found in the cytoplasm. The enzyme catalyses 3-hydroxyanthranilate + O2 = (2Z,4Z)-2-amino-3-carboxymuconate 6-semialdehyde. It participates in cofactor biosynthesis; NAD(+) biosynthesis; quinolinate from L-kynurenine: step 3/3. In terms of biological role, catalyzes the oxidative ring opening of 3-hydroxyanthranilate to 2-amino-3-carboxymuconate semialdehyde, which spontaneously cyclizes to quinolinate. In Aspergillus terreus (strain NIH 2624 / FGSC A1156), this protein is 3-hydroxyanthranilate 3,4-dioxygenase (bna1).